We begin with the raw amino-acid sequence, 347 residues long: Histone deacetylase 11 (347 aa).

The histone deacetylase stretch occupies residues Thr14 to Gly326. His143 is an active-site residue.

It belongs to the histone deacetylase family. As to quaternary structure, interacts with HDAC6. As to expression, weakly expressed in most tissues. Strongly expressed in brain, heart, skeletal muscle, kidney and testis.

Its subcellular location is the nucleus. It catalyses the reaction N(6)-acetyl-L-lysyl-[histone] + H2O = L-lysyl-[histone] + acetate. Responsible for the deacetylation of lysine residues on the N-terminal part of the core histones (H2A, H2B, H3 and H4). Histone deacetylation gives a tag for epigenetic repression and plays an important role in transcriptional regulation, cell cycle progression and developmental events. Histone deacetylases act via the formation of large multiprotein complexes. The chain is Histone deacetylase 11 (HDAC11) from Homo sapiens (Human).